A 470-amino-acid chain; its full sequence is Argininosuccinate lyase (470 aa).

Belongs to the lyase 1 family. Argininosuccinate lyase subfamily.

The protein localises to the cytoplasm. It carries out the reaction 2-(N(omega)-L-arginino)succinate = fumarate + L-arginine. The protein operates within amino-acid biosynthesis; L-arginine biosynthesis; L-arginine from L-ornithine and carbamoyl phosphate: step 3/3. This Mycobacterium sp. (strain JLS) protein is Argininosuccinate lyase.